Here is a 551-residue protein sequence, read N- to C-terminus: Tetrachloroethene reductive dehalogenase (551 aa).

The segment at residues 1 to 39 is a signal peptide (tat-type signal); sequence MGEINRRNFLKASMLGAAAAAVASASAVKGMVSPLVADA. Residues 411–440 form the 4Fe-4S ferredoxin-type 1 domain; that stretch reads PRKFGVREFCRLCKKCADACPAQAISHEKD. Cys-420, Cys-423, Cys-426, Cys-430, Cys-467, Cys-478, Cys-481, and Cys-485 together coordinate [4Fe-4S] cluster. The 4Fe-4S ferredoxin-type 2 domain occupies 478–496; sequence CANCVAVCSWNKVETWNHD.

This sequence belongs to the PceA family. As to quaternary structure, monomer. Requires [4Fe-4S] cluster as cofactor. Corrinoid is required as a cofactor. Predicted to be exported by the Tat system. The position of the signal peptide cleavage has been experimentally proven.

It localises to the cell membrane. The enzyme catalyses trichloroethene + chloride + A + H(+) = tetrachloroethene + AH2. It carries out the reaction trichloroethene + AH2 = (Z)-1,2-dichloroethene + chloride + A + H(+). Its activity is regulated as follows. Activity is inhibited by ammonium ions. Photoreversibly inactivated by 1-iodopropane. Catalyzes the reductive dechlorination of tetrachloroethene (PCE) to trichloroethene (TCE) and of trichloroethene to cis-1,2-dichloroethene (DCE). Can also use trichlorofluoroethene, tetrachloromethane, hexachloroethane, tetrachloroethane, trichloroethane and 1,1,1-trichloro-2,2,2-trifluoroethane. Menaquinone can act as the electron donor. Reduced methyl viologen can act as the artificial electron donor. The polypeptide is Tetrachloroethene reductive dehalogenase (Dehalobacter restrictus (strain DSM 9455 / PER-K23)).